The primary structure comprises 280 residues: Thymidylate synthase (280 aa).

Arg-21 contributes to the dUMP binding site. A (6R)-5,10-methylene-5,6,7,8-tetrahydrofolate-binding site is contributed by His-51. A dUMP-binding site is contributed by 142–143; the sequence is RR. The Nucleophile role is filled by Cys-162. DUMP is bound by residues 182–185, Asn-193, and 223–225; these read RSAD and HLY. Residue Asp-185 coordinates (6R)-5,10-methylene-5,6,7,8-tetrahydrofolate. Ala-279 contacts (6R)-5,10-methylene-5,6,7,8-tetrahydrofolate.

Belongs to the thymidylate synthase family. Bacterial-type ThyA subfamily. In terms of assembly, homodimer.

Its subcellular location is the cytoplasm. The enzyme catalyses dUMP + (6R)-5,10-methylene-5,6,7,8-tetrahydrofolate = 7,8-dihydrofolate + dTMP. The protein operates within pyrimidine metabolism; dTTP biosynthesis. Functionally, catalyzes the reductive methylation of 2'-deoxyuridine-5'-monophosphate (dUMP) to 2'-deoxythymidine-5'-monophosphate (dTMP) while utilizing 5,10-methylenetetrahydrofolate (mTHF) as the methyl donor and reductant in the reaction, yielding dihydrofolate (DHF) as a by-product. This enzymatic reaction provides an intracellular de novo source of dTMP, an essential precursor for DNA biosynthesis. The sequence is that of Thymidylate synthase from Acinetobacter baumannii (strain AB307-0294).